Here is a 381-residue protein sequence, read N- to C-terminus: Homoserine O-succinyltransferase (381 aa).

The region spanning 45–360 (NAVLVCHALN…PHGHDAFLLD (316 aa)) is the AB hydrolase-1 domain. The active-site Nucleophile is the Ser-151. Arg-221 lines the substrate pocket. Residues Asp-321 and His-354 contribute to the active site. Residue Asp-355 participates in substrate binding.

Belongs to the AB hydrolase superfamily. MetX family. As to quaternary structure, homodimer.

It localises to the cytoplasm. It carries out the reaction L-homoserine + succinyl-CoA = O-succinyl-L-homoserine + CoA. It functions in the pathway amino-acid biosynthesis; L-methionine biosynthesis via de novo pathway; O-succinyl-L-homoserine from L-homoserine: step 1/1. In terms of biological role, transfers a succinyl group from succinyl-CoA to L-homoserine, forming succinyl-L-homoserine. The sequence is that of Homoserine O-succinyltransferase from Paraburkholderia phytofirmans (strain DSM 17436 / LMG 22146 / PsJN) (Burkholderia phytofirmans).